The primary structure comprises 475 residues: Ribulose bisphosphate carboxylase large chain (475 aa).

A propeptide spanning residues 1 to 2 (MS) is cleaved from the precursor. Pro3 carries the post-translational modification N-acetylproline. Lys14 bears the N6,N6,N6-trimethyllysine mark. Substrate-binding residues include Asn123 and Thr173. The active-site Proton acceptor is the Lys175. Residue Lys177 coordinates substrate. Residues Lys201, Asp203, and Glu204 each coordinate Mg(2+). Lys201 bears the N6-carboxylysine mark. His294 (proton acceptor) is an active-site residue. Substrate contacts are provided by Arg295, His327, and Ser379.

The protein belongs to the RuBisCO large chain family. Type I subfamily. Heterohexadecamer of 8 large chains and 8 small chains; disulfide-linked. The disulfide link is formed within the large subunit homodimers. The cofactor is Mg(2+). In terms of processing, the disulfide bond which can form in the large chain dimeric partners within the hexadecamer appears to be associated with oxidative stress and protein turnover.

It localises to the plastid. Its subcellular location is the chloroplast. It catalyses the reaction 2 (2R)-3-phosphoglycerate + 2 H(+) = D-ribulose 1,5-bisphosphate + CO2 + H2O. The enzyme catalyses D-ribulose 1,5-bisphosphate + O2 = 2-phosphoglycolate + (2R)-3-phosphoglycerate + 2 H(+). RuBisCO catalyzes two reactions: the carboxylation of D-ribulose 1,5-bisphosphate, the primary event in carbon dioxide fixation, as well as the oxidative fragmentation of the pentose substrate in the photorespiration process. Both reactions occur simultaneously and in competition at the same active site. The chain is Ribulose bisphosphate carboxylase large chain from Clarkia xantiana (Gunsight clarkia).